We begin with the raw amino-acid sequence, 258 residues long: DNA repair protein RecO (258 aa).

It belongs to the RecO family.

In terms of biological role, involved in DNA repair and RecF pathway recombination. The chain is DNA repair protein RecO from Desulfatibacillum aliphaticivorans.